Here is a 502-residue protein sequence, read N- to C-terminus: Premnaspirodiene oxygenase (502 aa).

A helical transmembrane segment spans residues Gln2–Trp22. Residue Cys440 coordinates heme.

It belongs to the cytochrome P450 family. Heme is required as a cofactor.

The protein resides in the membrane. It carries out the reaction (-)-vetispiradiene + 2 reduced [NADPH--hemoprotein reductase] + 2 O2 = solavetivone + 2 oxidized [NADPH--hemoprotein reductase] + 3 H2O + 2 H(+). In terms of biological role, involved in the biosynthesis of solavetivone, a potent antifungal phytoalexin. Catalyzes the successive and independent hydroxylations of premnaspirodiene and solavetivol. The first hydroxylation step is 3-fold more efficient than the second hydroxylation reaction. The protein is Premnaspirodiene oxygenase (CYP71D55) of Hyoscyamus muticus (Egyptian henbane).